Consider the following 487-residue polypeptide: Putative KilA-N domain-containing protein L37 (487 aa).

Residues 1 to 12 (MKVQKSSKKPLK) show a composition bias toward basic residues. The tract at residues 1 to 137 (MKVQKSSKKP…DINSDDDNNL (137 aa)) is disordered. The span at 22 to 34 (KSGSKSMKSSKSS) shows a compositional bias: low complexity. 2 stretches are compositionally biased toward acidic residues: residues 47–77 (DSEI…ESSD) and 111–136 (VLDD…DDNN). Residues 175–284 (EISKGIYGTF…HKVSKIVNDY (110 aa)) enclose the KilA-N domain. Residues 290–338 (FDKHEQLIKGKDDKIAELTRKIDKQTSLMKDQKSTIKEQDKKINELLSK) adopt a coiled-coil conformation.

This chain is Putative KilA-N domain-containing protein L37, found in Acanthamoeba polyphaga mimivirus (APMV).